We begin with the raw amino-acid sequence, 105 residues long: Small ribosomal subunit protein uS10 (105 aa).

It belongs to the universal ribosomal protein uS10 family. In terms of assembly, part of the 30S ribosomal subunit.

Involved in the binding of tRNA to the ribosomes. This is Small ribosomal subunit protein uS10 from Solidesulfovibrio magneticus (strain ATCC 700980 / DSM 13731 / RS-1) (Desulfovibrio magneticus).